Here is a 159-residue protein sequence, read N- to C-terminus: Transmembrane protein 92 (159 aa).

A signal peptide spans M1–A26. Residues K27–R57 are Extracellular-facing. Residues I58–C78 traverse the membrane as a helical segment. The Cytoplasmic portion of the chain corresponds to F79–F159. The tract at residues E122–F159 is disordered.

The protein resides in the membrane. This is Transmembrane protein 92 (TMEM92) from Homo sapiens (Human).